A 250-amino-acid chain; its full sequence is tRNA (guanine-N(1)-)-methyltransferase (250 aa).

Residues Gly-114 and 134 to 139 (IGDYVL) contribute to the S-adenosyl-L-methionine site.

Belongs to the RNA methyltransferase TrmD family. As to quaternary structure, homodimer.

The protein localises to the cytoplasm. It catalyses the reaction guanosine(37) in tRNA + S-adenosyl-L-methionine = N(1)-methylguanosine(37) in tRNA + S-adenosyl-L-homocysteine + H(+). Functionally, specifically methylates guanosine-37 in various tRNAs. The sequence is that of tRNA (guanine-N(1)-)-methyltransferase from Moorella thermoacetica (strain ATCC 39073 / JCM 9320).